Here is a 221-residue protein sequence, read N- to C-terminus: Pyridoxal phosphate homeostasis protein (221 aa).

Lys-26 bears the N6-(pyridoxal phosphate)lysine mark.

It belongs to the pyridoxal phosphate-binding protein YggS/PROSC family.

Pyridoxal 5'-phosphate (PLP)-binding protein, which is involved in PLP homeostasis. The chain is Pyridoxal phosphate homeostasis protein from Corynebacterium glutamicum (strain ATCC 13032 / DSM 20300 / JCM 1318 / BCRC 11384 / CCUG 27702 / LMG 3730 / NBRC 12168 / NCIMB 10025 / NRRL B-2784 / 534).